Reading from the N-terminus, the 133-residue chain is UPF0344 protein SH1980 (133 aa).

The next 4 helical transmembrane spans lie at 1-21, 42-62, 71-91, and 103-123; these read MLHM…IAFL, VFML…FMAA, MLLT…EVSI, and LFWA…ILPW.

This sequence belongs to the UPF0344 family.

The protein localises to the cell membrane. The chain is UPF0344 protein SH1980 from Staphylococcus haemolyticus (strain JCSC1435).